Consider the following 147-residue polypeptide: UPF0306 protein YhbP (147 aa).

This sequence belongs to the UPF0306 family.

The polypeptide is UPF0306 protein YhbP (Shigella boydii serotype 4 (strain Sb227)).